The sequence spans 279 residues: Thioredoxin domain-containing protein plp1 (279 aa).

Basic and acidic residues predominate over residues 56-70 (RKEDTQDYNEPELHN). A disordered region spans residues 56-75 (RKEDTQDYNEPELHNSNDPT). One can recognise a Thioredoxin domain in the interval 137-248 (FLTVENEREV…LEFRLLKSSA (112 aa)). A compositionally biased stretch (basic and acidic residues) spans 254 to 267 (EESSSNKSIYHDEL). Residues 254-279 (EESSSNKSIYHDELQNNQSDDSDFFE) form a disordered region. Phosphoserine occurs at positions 272 and 275.

Belongs to the phosducin family.

Its subcellular location is the cytoplasm. It localises to the nucleus. Its function is as follows. Inhibits early G-protein signaling events following pheromone stimulation. May help create heterodimerizable beta-tubulin by facilitating the efficient transfer of nascent beta-tubulin polypeptides to the folding apparatus. In Schizosaccharomyces pombe (strain 972 / ATCC 24843) (Fission yeast), this protein is Thioredoxin domain-containing protein plp1 (plp1).